The sequence spans 62 residues: Protein A37.5 homolog (62 aa).

It belongs to the orthopoxviruses A37.5 protein family.

The chain is Protein A37.5 homolog (A40_5R) from Homo sapiens (Human).